The chain runs to 199 residues: dTTP/UTP pyrophosphatase (199 aa).

D75 functions as the Proton acceptor in the catalytic mechanism.

The protein belongs to the Maf family. YhdE subfamily. It depends on a divalent metal cation as a cofactor.

The protein localises to the cytoplasm. It catalyses the reaction dTTP + H2O = dTMP + diphosphate + H(+). The catalysed reaction is UTP + H2O = UMP + diphosphate + H(+). Its function is as follows. Nucleoside triphosphate pyrophosphatase that hydrolyzes dTTP and UTP. May have a dual role in cell division arrest and in preventing the incorporation of modified nucleotides into cellular nucleic acids. The polypeptide is dTTP/UTP pyrophosphatase (Methylobacillus flagellatus (strain ATCC 51484 / DSM 6875 / VKM B-1610 / KT)).